Reading from the N-terminus, the 263-residue chain is MIFHASPGVIDLGVNIDHVATLRNARGTTYPDPIAAALLAEEAGADLITLHLREDRRHIKDADVRALRPQLRTRMNLECAVTQEMLDIACDIGPQDVCLVPERRQEVTTEGGLDVVGGFAKVQAACQQLAGAGIRVSLFIDPDPAQIEAAAATGAPVVELHTGRYAEATDDAEVKAELVRIERAVEEGIRWGLRVNAGHGLHYTNVQPIAAMAGIHELNIGHAIVAHAVFAGWQNAVREMKAIMVAARLSATTPAAAHPGVPA.

Asn-15 lines the 3-amino-2-oxopropyl phosphate pocket. Residue 17 to 18 coordinates 1-deoxy-D-xylulose 5-phosphate; the sequence is DH. Arg-26 is a binding site for 3-amino-2-oxopropyl phosphate. The active-site Proton acceptor is His-51. 1-deoxy-D-xylulose 5-phosphate is bound by residues Arg-53 and His-58. Catalysis depends on Glu-78, which acts as the Proton acceptor. Thr-108 is a 1-deoxy-D-xylulose 5-phosphate binding site. The active-site Proton donor is the His-199. 3-amino-2-oxopropyl phosphate-binding positions include Gly-200 and 221-222; that span reads GH.

The protein belongs to the PNP synthase family. Homooctamer; tetramer of dimers.

The protein localises to the cytoplasm. It carries out the reaction 3-amino-2-oxopropyl phosphate + 1-deoxy-D-xylulose 5-phosphate = pyridoxine 5'-phosphate + phosphate + 2 H2O + H(+). It participates in cofactor biosynthesis; pyridoxine 5'-phosphate biosynthesis; pyridoxine 5'-phosphate from D-erythrose 4-phosphate: step 5/5. Functionally, catalyzes the complicated ring closure reaction between the two acyclic compounds 1-deoxy-D-xylulose-5-phosphate (DXP) and 3-amino-2-oxopropyl phosphate (1-amino-acetone-3-phosphate or AAP) to form pyridoxine 5'-phosphate (PNP) and inorganic phosphate. The polypeptide is Pyridoxine 5'-phosphate synthase (Ralstonia nicotianae (strain ATCC BAA-1114 / GMI1000) (Ralstonia solanacearum)).